A 342-amino-acid polypeptide reads, in one-letter code: Ferredoxin--NADP reductase (342 aa).

Positions 17, 36, 44, 49, 89, 124, 289, and 330 each coordinate FAD.

It belongs to the ferredoxin--NADP reductase type 2 family. In terms of assembly, homodimer. FAD serves as cofactor.

It catalyses the reaction 2 reduced [2Fe-2S]-[ferredoxin] + NADP(+) + H(+) = 2 oxidized [2Fe-2S]-[ferredoxin] + NADPH. In Bradyrhizobium sp. (strain ORS 278), this protein is Ferredoxin--NADP reductase.